Reading from the N-terminus, the 168-residue chain is Small ribosomal subunit protein uS8 (168 aa).

The segment at 59 to 93 (EEFKKMKELAEKSPNPKMRRYLQQLIDYNKGTQYP) is not found in other S8 sequences.

It belongs to the universal ribosomal protein uS8 family. In terms of assembly, part of the 30S ribosomal subunit. Contacts proteins S5 and S12.

Functionally, one of the primary rRNA binding proteins, it binds directly to 16S rRNA central domain where it helps coordinate assembly of the platform of the 30S subunit. The polypeptide is Small ribosomal subunit protein uS8 (Aquifex pyrophilus).